The primary structure comprises 232 residues: Probable GTP-binding protein EngB (232 aa).

One can recognise an EngB-type G domain in the interval 13 to 188 (IGLEVAFAGR…AGVMGNWYEY (176 aa)). GTP is bound by residues 21–28 (GRSNAGKS), 48–52 (GRTQM), 67–70 (DLPG), 134–137 (TKAD), and 167–169 (FSA). The Mg(2+) site is built by S28 and T50.

Belongs to the TRAFAC class TrmE-Era-EngA-EngB-Septin-like GTPase superfamily. EngB GTPase family. The cofactor is Mg(2+).

Its function is as follows. Necessary for normal cell division and for the maintenance of normal septation. The chain is Probable GTP-binding protein EngB from Psychrobacter arcticus (strain DSM 17307 / VKM B-2377 / 273-4).